The sequence spans 91 residues: Probable Fe(2+)-trafficking protein (91 aa).

Belongs to the Fe(2+)-trafficking protein family.

Functionally, could be a mediator in iron transactions between iron acquisition and iron-requiring processes, such as synthesis and/or repair of Fe-S clusters in biosynthetic enzymes. This Xanthomonas euvesicatoria pv. vesicatoria (strain 85-10) (Xanthomonas campestris pv. vesicatoria) protein is Probable Fe(2+)-trafficking protein.